The following is a 379-amino-acid chain: Adenylosuccinate synthetase (379 aa).

GTP is bound by residues 11-17 (GDEGKGK) and 39-41 (GHT). Catalysis depends on Asp-12, which acts as the Proton acceptor. The Mg(2+) site is built by Asp-12 and Gly-39. Residues 12–15 (DEGK), 37–40 (NAGH), Thr-127, Arg-141, Gln-223, Thr-238, and Arg-302 contribute to the IMP site. The active-site Proton donor is His-40. 298-304 (TTTGRGR) provides a ligand contact to substrate. GTP is bound by residues Arg-304 and 330–332 (KLD).

Belongs to the adenylosuccinate synthetase family. Homodimer. Mg(2+) serves as cofactor.

Its subcellular location is the cytoplasm. The enzyme catalyses IMP + L-aspartate + GTP = N(6)-(1,2-dicarboxyethyl)-AMP + GDP + phosphate + 2 H(+). It participates in purine metabolism; AMP biosynthesis via de novo pathway; AMP from IMP: step 1/2. Plays an important role in the de novo pathway of purine nucleotide biosynthesis. Catalyzes the first committed step in the biosynthesis of AMP from IMP. The polypeptide is Adenylosuccinate synthetase (Methanosarcina mazei (strain ATCC BAA-159 / DSM 3647 / Goe1 / Go1 / JCM 11833 / OCM 88) (Methanosarcina frisia)).